Reading from the N-terminus, the 242-residue chain is Small ribosomal subunit protein uS3 (242 aa).

In terms of domain architecture, KH type-2 spans 39-109 (IRQYVEKNLA…QIRINVIEVA (71 aa)). A disordered region spans residues 220 to 242 (VPAQAPRRQQRRRQQFEDRSSEG). Basic and acidic residues predominate over residues 233–242 (QQFEDRSSEG).

The protein belongs to the universal ribosomal protein uS3 family. Part of the 30S ribosomal subunit. Forms a tight complex with proteins S10 and S14.

In terms of biological role, binds the lower part of the 30S subunit head. Binds mRNA in the 70S ribosome, positioning it for translation. This is Small ribosomal subunit protein uS3 from Microcystis aeruginosa (strain NIES-843 / IAM M-2473).